The sequence spans 261 residues: (3R)-3-hydroxyacyl-CoA dehydrogenase (261 aa).

NAD(+) contacts are provided by residues 15–23 (LVTGAGSGI) and 42–43 (DL). At Ser-60 the chain carries Phosphoserine. Residue 74-76 (ADV) participates in NAD(+) binding. Ser-156 is a binding site for substrate. Lys-160 bears the N6-succinyllysine mark. The active-site Proton acceptor is Tyr-169. Residues 169–173 (YAASK) and 202–204 (IAT) each bind NAD(+). Residue Lys-173 is modified to N6-succinyllysine.

This sequence belongs to the short-chain dehydrogenases/reductases (SDR) family. Heterotetramer with CBR4; contains two molecules of HSD17B8 and CBR4. Widely expressed, particularly abundant in prostate, placenta and kidney. Expressed at protein level in various tissues like brain, cerebellum, heart, lung, kidney, ovary, testis, adrenals and prostate.

It localises to the mitochondrion matrix. It catalyses the reaction a (3R)-3-hydroxyacyl-CoA + NAD(+) = a 3-oxoacyl-CoA + NADH + H(+). It carries out the reaction 17beta-estradiol + NAD(+) = estrone + NADH + H(+). The catalysed reaction is testosterone + NAD(+) = androst-4-ene-3,17-dione + NADH + H(+). The enzyme catalyses 17beta-hydroxy-5alpha-androstan-3-one + NAD(+) = 5alpha-androstan-3,17-dione + NADH + H(+). Its pathway is steroid biosynthesis; estrogen biosynthesis. It functions in the pathway lipid metabolism; fatty acid biosynthesis. It participates in lipid metabolism; mitochondrial fatty acid beta-oxidation. Required for the solubility and assembly of the heterotetramer 3-ketoacyl-[acyl carrier protein] (ACP) reductase functional complex (KAR or KAR1) that forms part of the mitochondrial fatty acid synthase (mtFAS). Alpha-subunit of the KAR complex that acts as a scaffold protein required for the stability of carbonyl reductase type-4 (CBR4, beta-subunit of the KAR complex) and for its 3-ketoacyl-ACP reductase activity, thereby participating in mitochondrial fatty acid biosynthesis. Catalyzes the NAD-dependent conversion of (3R)-3-hydroxyacyl-CoA into 3-ketoacyl-CoA (3-oxoacyl-CoA) with no chain length preference; this enzymatic activity is not needed for the KAR function. Prefers (3R)-3-hydroxyacyl-CoA over (3S)-3-hydroxyacyl-CoA and displays enzymatic activity only in the presence of NAD(+). Cooperates with enoyl-CoA hydratase 1 in mitochondria, together they constitute an alternative route to the auxiliary enzyme pathways for the breakdown of Z-PUFA (cis polyunsaturated fatty acid) enoyl-esters. NAD-dependent 17-beta-hydroxysteroid dehydrogenase with highest activity towards estradiol (17beta-estradiol or E2). Has very low activity towards testosterone and dihydrotestosterone (17beta-hydroxy-5alpha-androstan-3-one). Primarily an oxidative enzyme, it can switch to a reductive mode determined in the appropriate physiologic milieu and catalyze the reduction of estrone (E1) to form biologically active 17beta-estradiol. This Homo sapiens (Human) protein is (3R)-3-hydroxyacyl-CoA dehydrogenase (HSD17B8).